The following is a 143-amino-acid chain: MVKPPLRCQGGQVARGHRALSIALKTEDLVGGLSITKDRGDRDDGRYGEPRIQRKPGQLTANDPVAYDFVRHVASVSTRDLKVGVVDGQRIPVRFAHDKSAAWAKDTPGLCKCLGRVRHVLEHAVGPGTVDAAVLERERVDIA.

The segment at isoleucine 35–leucine 59 is disordered. A compositionally biased stretch (basic and acidic residues) spans threonine 36–isoleucine 52.

This is an uncharacterized protein from Streptomyces fradiae (Streptomyces roseoflavus).